Consider the following 395-residue polypeptide: Altered inheritance of mitochondria protein 39, mitochondrial (395 aa).

A helical transmembrane segment spans residues 156 to 176; the sequence is QIWSAIFGGIFGVILGYSLIY.

Belongs to the AIM39 family.

The protein localises to the mitochondrion membrane. This chain is Altered inheritance of mitochondria protein 39, mitochondrial (AIM39), found in Saccharomyces cerevisiae (strain RM11-1a) (Baker's yeast).